The chain runs to 188 residues: MKASEMKKGSIVEYNNGTYQIRDIQRSSPQGRGGNVRFRFVMYSVPGGSKLEASFDADEMLTAVELLRREASFSYKDGEAFVFLDEENYTLYTLDAEAIGDNAGYISEGLSGCYVQLIDASPVALQLPQHVVLEVVDTPPELKGGTATKRPKPAKLITGIEVMVPEYITTGERILVNTTTGAFGGRAS.

This sequence belongs to the elongation factor P family.

This chain is Elongation factor P-like protein, found in Xylella fastidiosa (strain M12).